Here is a 775-residue protein sequence, read N- to C-terminus: MGRGSGTFERLLDKATSQLLLETDWESILQICDLIRQGDTQAKYAVNSIKKKVNDKNPHVALYALEVMESVVKNCGQTVHDEVANKQTMEELKELLKRQVEVNVRNKILYLIQAWAHAFRNEPKYKVVQDTYQIMKVEGHVFPEFKESDAMFAAERAPDWVDAEECHRCRVQFGVVTRKHHCRACGQIFCGKCSSKYSTIPKFGIEKEVRVCEPCYEQLNKKAEGKASSTTELPPEYLTSPLSQQSQLPPKRDETALQEEEELQLALALSQSEAEEKERMRQKTTYTAHPKAEPTPLASSAPPAGSLYSSPVNSSAPLAEDIDPELARYLNRNYWEKKQEEARKSPTPSAPVPLTEPAAQPGEGHTAPNSMAEAPLPETDSQPITPCSGPFSEYQNGESEESHEQFLKALQNAVSTFVNRMKSNHMRGRSITNDSAVLSLFQSINTMHPQLLELLNQLDERRLYYEGLQDKLAQIRDARGALSALREEHREKLRRAAEEAERQRQIQLAQKLEIMRQKKQEYLEVQRQLAIQRLQEQEKERQMRLEQQKQTVQMRAQMPAFPLPYAQLQAMPTAGGVLYQPSGPTSFPATFSPAGSVEGSPMHGVYMSQPAPATGPYPSMPGTTADPSMVSAYMYPTGAPGAQAAPQAQAGPTTSPAYSSYQPTPTPGYQSVASQAPQSLPAISQPPQTSNIGYMGSQPMSMGYQPYNMQNLMTALPGQDASLPAQQPYIPGQQPLYQQMAPSTGPPQQQPPVAQPAPTQGPPAQGSEAQLISFD.

The VHS domain occupies 15-143; sequence ATSQLLLETD…IMKVEGHVFP (129 aa). An FYVE-type zinc finger spans residues 160-220; the sequence is WVDAEECHRC…VCEPCYEQLN (61 aa). Positions 166, 169, 182, 185, 190, and 193 each coordinate Zn(2+). K207 bears the N6-acetyllysine mark. Zn(2+) is bound by residues C212 and C215. The residue at position 216 (Y216) is a Phosphotyrosine. Positions 223–319 are disordered; it reads AEGKASSTTE…SPVNSSAPLA (97 aa). An interaction with SNX1 region spans residues 225–541; that stretch reads GKASSTTELP…QRLQEQEKER (317 aa). Residues 258 to 277 enclose the UIM domain; that stretch reads QEEEELQLALALSQSEAEEK. Residues 307 to 316 show a composition bias toward polar residues; sequence LYSSPVNSSA. Residues Y308, Y329, and Y334 each carry the phosphotyrosine modification. The disordered stretch occupies residues 338-405; the sequence is KQEEARKSPT…NGESEESHEQ (68 aa). The tract at residues 443–541 is interaction with SNAP25 and TRAK2; it reads SINTMHPQLL…QRLQEQEKER (99 aa). Residues 452 to 570 are interaction with STAM; sequence LELLNQLDER…FPLPYAQLQA (119 aa). Positions 478-775 are interaction with NF2; sequence ARGALSALRE…GSEAQLISFD (298 aa). N6-succinyllysine is present on K549. A compositionally biased stretch (low complexity) spans 640-657; the sequence is PGAQAAPQAQAGPTTSPA. Disordered regions lie at residues 640-690 and 719-775; these read PGAQ…PQTS and QDAS…ISFD. Polar residues predominate over residues 658-690; that stretch reads YSSYQPTPTPGYQSVASQAPQSLPAISQPPQTS. Pro residues predominate over residues 744-761; it reads TGPPQQQPPVAQPAPTQG.

In terms of assembly, component of the ESCRT-0 complex composed of STAM or STAM2 and HGS. Part of a complex at least composed of HSG, STAM2 (or probably STAM) and EPS15. Interacts with STAM. Interacts with STAM2. Interacts with EPS15; the interaction is direct, calcium-dependent and inhibited by SNAP25. Identified in a complex with STAM and LITAF. Found in a complex with STAM and E3 ligase ITCH and DTX3L. Interacts with E3 ligase DTX3L; the interaction brings together STAM and HSG, promotes their recruitment to early endosomes and decreases STAM and HGS ubiquitination by ITCH. Interacts with NF2; the interaction is direct. Interacts with ubiquitin; the interaction is direct. Interacts with VPS37C. Interacts with SMAD1, SMAD2 and SMAD3. Interacts with TSG101; the interaction mediates the association with the ESCRT-I complex. Interacts with SNAP25; the interaction is direct and decreases with addition of increasing concentrations of free calcium. Interacts with SNX1; the interaction is direct. Component of a 550 kDa membrane complex at least composed of HGS and SNX1 but excluding EGFR. Interacts with TRAK1. Interacts with TRAK2. Component of the CART complex, at least composed of ACTN4, HGS/HRS, MYO5B and TRIM3. Interacts with ARRDC3. Identified in a complex containing at least ARRDC4, AVPR2 and HGS. Interacts (via UIM domain) with UBQLN1 (via ubiquitin-like domain). Interacts with LAPTM4B; promotes HGS ubiquitination. Phosphorylated on Tyr-334. This phosphorylation occurs in response to EGF. A minor site of phosphorylation on Tyr-329 is detected. Protein phosphorylation may also be triggered in response to IL-2, GM-CSF and HGF. Post-translationally, ubiquitinated by ITCH. As to expression, ubiquitous expression in adult and fetal tissues with higher expression in testis.

The protein resides in the cytoplasm. Its subcellular location is the early endosome membrane. The protein localises to the endosome. It localises to the multivesicular body membrane. Functionally, involved in intracellular signal transduction mediated by cytokines and growth factors. When associated with STAM, it suppresses DNA signaling upon stimulation by IL-2 and GM-CSF. Could be a direct effector of PI3-kinase in vesicular pathway via early endosomes and may regulate trafficking to early and late endosomes by recruiting clathrin. May concentrate ubiquitinated receptors within clathrin-coated regions. Involved in down-regulation of receptor tyrosine kinase via multivesicular body (MVBs) when complexed with STAM (ESCRT-0 complex). The ESCRT-0 complex binds ubiquitin and acts as a sorting machinery that recognizes ubiquitinated receptors and transfers them to further sequential lysosomal sorting/trafficking processes. May contribute to the efficient recruitment of SMADs to the activin receptor complex. Involved in receptor recycling via its association with the CART complex, a multiprotein complex required for efficient transferrin receptor recycling but not for EGFR degradation. The protein is Hepatocyte growth factor-regulated tyrosine kinase substrate (Hgs) of Mus musculus (Mouse).